A 269-amino-acid chain; its full sequence is Phosphate import ATP-binding protein PstB 2 (269 aa).

One can recognise an ABC transporter domain in the interval 23–264; that stretch reads LHTEDLHVFY…PKIQATEDYV (242 aa). 55 to 62 lines the ATP pocket; it reads GPSGCGKS.

This sequence belongs to the ABC transporter superfamily. Phosphate importer (TC 3.A.1.7) family. In terms of assembly, the complex is composed of two ATP-binding proteins (PstB), two transmembrane proteins (PstC and PstA) and a solute-binding protein (PstS).

Its subcellular location is the cell membrane. It catalyses the reaction phosphate(out) + ATP + H2O = ADP + 2 phosphate(in) + H(+). Its function is as follows. Part of the ABC transporter complex PstSACB involved in phosphate import. Responsible for energy coupling to the transport system. The protein is Phosphate import ATP-binding protein PstB 2 of Enterococcus faecalis (strain ATCC 700802 / V583).